Reading from the N-terminus, the 395-residue chain is Probable protein arginine N-methyltransferase 6.2 (395 aa).

A compositionally biased stretch (gly residues) spans 1–11; that stretch reads MFAGGADGGNG. The interval 1–37 is disordered; the sequence is MFAGGADGGNGHLPRPRRARRGGGGGGGMGSPPLGPP. One can recognise an SAM-dependent MTase PRMT-type domain in the interval 45–390; sequence DMAYFKAYSH…YFTRDQWYVK (346 aa). S-adenosyl-L-methionine-binding residues include His58, Arg67, Gly91, Asp113, and Glu142. Catalysis depends on residues Glu156 and Glu165. A disordered region spans residues 300–324; sequence KKQANQCLDGNTQDASPSNKKKKAD. Residues 302 to 317 show a composition bias toward polar residues; sequence QANQCLDGNTQDASPS.

This sequence belongs to the class I-like SAM-binding methyltransferase superfamily. Protein arginine N-methyltransferase family. PRMT6 subfamily.

In terms of biological role, arginine methyltransferase that can both catalyze the formation of omega-N monomethylarginine (MMA) and asymmetrical dimethylarginine (aDMA). The protein is Probable protein arginine N-methyltransferase 6.2 (PRMT6.2) of Oryza sativa subsp. indica (Rice).